Reading from the N-terminus, the 238-residue chain is 2-C-methyl-D-erythritol 4-phosphate cytidylyltransferase (238 aa).

It belongs to the IspD/TarI cytidylyltransferase family. IspD subfamily.

The catalysed reaction is 2-C-methyl-D-erythritol 4-phosphate + CTP + H(+) = 4-CDP-2-C-methyl-D-erythritol + diphosphate. It functions in the pathway isoprenoid biosynthesis; isopentenyl diphosphate biosynthesis via DXP pathway; isopentenyl diphosphate from 1-deoxy-D-xylulose 5-phosphate: step 2/6. Functionally, catalyzes the formation of 4-diphosphocytidyl-2-C-methyl-D-erythritol from CTP and 2-C-methyl-D-erythritol 4-phosphate (MEP). The chain is 2-C-methyl-D-erythritol 4-phosphate cytidylyltransferase from Paraburkholderia phytofirmans (strain DSM 17436 / LMG 22146 / PsJN) (Burkholderia phytofirmans).